The following is a 692-amino-acid chain: Pentatricopeptide repeat-containing protein At2g04860 (692 aa).

PPR repeat units lie at residues 12–46 (DLSY…SLTP), 47–83 (NHFT…GLDR), 84–114 (FVYV…MPER), 115–149 (DTVV…GFSP), 150–184 (SATT…GLEL), 185–215 (DSQV…MKDK), 216–250 (STVS…NVEI), 280–314 (DISV…SIVG), 316–345 (TSIV…CMKI), 346–380 (DAVA…GLCT), 381–411 (KTLV…LQET), 412–447 (PLIS…GLLP), 448–482 (DAIT…NFEN), 483–513 (ENFV…IKAP), 514–548 (CTAT…GLKP), 549–584 (DEIT…GISP), and 585–615 (TLQH…MDIK). Positions 620–692 (VWGALLSACI…YDGYLGVSQI (73 aa)) are type E motif; degenerate.

It belongs to the PPR family. PCMP-E subfamily.

The protein is Pentatricopeptide repeat-containing protein At2g04860 (PCMP-E74) of Arabidopsis thaliana (Mouse-ear cress).